The following is a 2353-amino-acid chain: Nonribosomal peptide synthetase 7 (2353 aa).

Positions 305-684 (TFSALNTRAN…AIEEVEDSAV (380 aa)) are adenylation 1. The 78-residue stretch at 776 to 853 (RDLTDSEKVV…QVAAAVQPQP (78 aa)) folds into the Carrier 1 domain. Residue S813 is modified to O-(pantetheine 4'-phosphoryl)serine. The segment at 885-1147 (EDAFPVTPFQ…LMVAPLRVKV (263 aa)) is condensation 1. The interval 1338-1725 (TYAGLAIKMN…QTNVFRQCAV (388 aa)) is adenylation 2. The region spanning 1826–1902 (EICSEAEREL…EQAALMVQGQ (77 aa)) is the Carrier 2 domain. An O-(pantetheine 4'-phosphoryl)serine modification is found at S1863. The segment at 1939–2214 (EDIYPCSPGQ…NGNCANFLPY (276 aa)) is condensation 2.

Belongs to the NRP synthetase family.

Its function is as follows. Nonribosomal peptide synthesis (NRPS) is a key mechanism responsible for the biosynthesis of bioactive metabolites which are potentially contributing to organismal virulence. In Aspergillus fumigatus (strain ATCC MYA-4609 / CBS 101355 / FGSC A1100 / Af293) (Neosartorya fumigata), this protein is Nonribosomal peptide synthetase 7 (NRPS7).